Here is a 427-residue protein sequence, read N- to C-terminus: uncharacterized protein (427 aa).

A run of 3 helical transmembrane segments spans residues 10–30 (LAYLVFESVLQVVIIALAGFW), 43–63 (KIISLLNVDLFTPCLIFSKLA), and 71–91 (IFEIAIIPIFFGLTTGISFIS). The residue at position 199 (Thr199) is a Phosphothreonine. Phosphoserine is present on Ser234. 5 helical membrane passes run 253 to 273 (NLNPPLYSMIFAVVVAAIGPL), 288 to 308 (FAEAVTQLGSVSIPLILVVLG), 327 to 347 (LLIGSIIGRMILPSCFLLPII), 358 to 378 (ILDDPIFLVVGFLLTVSPPAI), and 397 to 417 (ILFWGYAVLSLPVSIIVVSGA).

Belongs to the auxin efflux carrier (TC 2.A.69) family.

It localises to the membrane. This is an uncharacterized protein from Saccharomyces cerevisiae (strain ATCC 204508 / S288c) (Baker's yeast).